A 227-amino-acid chain; its full sequence is Probable methylthioribulose-1-phosphate dehydratase (227 aa).

Cys-87 lines the substrate pocket. His-105 and His-107 together coordinate Zn(2+). Glu-129 (proton donor/acceptor) is an active-site residue. His-185 lines the Zn(2+) pocket.

It belongs to the aldolase class II family. MtnB subfamily. The cofactor is Zn(2+).

Its subcellular location is the cytoplasm. It catalyses the reaction 5-(methylsulfanyl)-D-ribulose 1-phosphate = 5-methylsulfanyl-2,3-dioxopentyl phosphate + H2O. Its pathway is amino-acid biosynthesis; L-methionine biosynthesis via salvage pathway; L-methionine from S-methyl-5-thio-alpha-D-ribose 1-phosphate: step 2/6. Functionally, catalyzes the dehydration of methylthioribulose-1-phosphate (MTRu-1-P) into 2,3-diketo-5-methylthiopentyl-1-phosphate (DK-MTP-1-P). The sequence is that of Probable methylthioribulose-1-phosphate dehydratase from Drosophila erecta (Fruit fly).